A 208-amino-acid chain; its full sequence is Guanylate kinase (208 aa).

Residues 21 to 201 (GRVVVLSGPS…ACAELVSLLV (181 aa)) enclose the Guanylate kinase-like domain. An ATP-binding site is contributed by 28-35 (GPSAVGKS).

It belongs to the guanylate kinase family.

The protein localises to the cytoplasm. It catalyses the reaction GMP + ATP = GDP + ADP. Its function is as follows. Essential for recycling GMP and indirectly, cGMP. The sequence is that of Guanylate kinase (gmk) from Mycobacterium bovis (strain ATCC BAA-935 / AF2122/97).